We begin with the raw amino-acid sequence, 1342 residues long: MVYSYTEKKRIRKDFGTRPQVLDIPYLLSIQLDSFDKFIEQDPEGQYGLEAAFRSVFPIQSYNGNSELQYVSYRLGEPVFDVKECQIRGVTYSKPLRVKLRLVIFDKDAPAGTVKDIKEQEVYMGEIPLMTDNGTFVINGTERVIVSQLHRSPGVFFDSDKGKTHSSGKVLYNARIIPYRGSWLDFEFDPKDNLYVRIDRRRKLPSTIILRALGKSTEEILDTFFEKVNFEVKDQTLMMELVPDRLRGETATFDIEANGTVYVEKGRRVTARHIRQLEKEGVDQIEVPVEYIVGKVSSKDYINEATGEIIVAANQEISLEALAKLSQAGHKQLEVLFTNDLDHGPFMSETLRIDSSVDRISALVEIYRMMRPGEPPTKEAAEALFESLFFSEERYDLSTVGRMKFNSSIGRDDAEEQGTLDETDIIEVMKKLIAIRNGKGEVDDIDHLGNRRIRSVGEMAENQFRVGLVRVERAVKERLSLGDLDAVMPQDLINAKPISAAVKEFFGSSQLSQFMDQNNPLSEVTHKRRISALGPGGLTRERAGFEVRDVHVTHYGRLCPIETPEGPNIGLINSLSAFARCNEYGFLETPYRRVVDGVVTDEVDYLSAIEEGQFVIAQANAKLNEDGTFADELITARQKGESGLHPREHVDYMDVATNQVVSIAASLIPFLEHDDANRALMGANMQRQAVPTLKAEKPLVGTGIERNVAVDSGVTSVAKRGGIIQSVDASRIVVKVNEEELIPGEAGIDIYNLTKYTRSNQNTCINQRPCVMPGEPVLRGDVLADGPSTDLGELALGQNMRIAFMPWNGYNFEDSILVSERVVQEDRFTTIHIQELTCVARDTKLGSEEITADIPNVGESALSKLDESGIVYIGAEVKGGDILVGKVTPKGETQLTPEEKLLRAIFGEKASDVKDTSLRVPNSVSGTIIDVQVFTRDGVEKDKRALEIEQMQLKEAKKDLTEEFQILEGGLLNRVKAVLLSGGYSEAKLDTTDRKKWLELTLEDDALQTQLEQLAEQYDELKADFDKKFETKRRKITQGDDLAPGVLKIVKVYLAVKRRIQPGDKMAGRHGNKGVISKINPVEDMPYDEKGQPVDIVLNPLGVPSRMNIGQILEVHLGLAAKGIGDKINQMVKEQQELAKFREFLQKVYDLGETRQKVDIASLSDEEVRTLIGNLRGGLPIATPVFDGASEASIKELLKLGGLPESGQLTLFDGRTGDAFERPVTVGYMYMLKLNHLVDDKMHARSTGSYSLVTQQPLGGKAQFGGQRFGEMEVWALEAYGAAYTLQEMLTVKSDDVNGRTKMYKNIVDGNHAMEPGMPESFNVLLKEIRSLGINIELEDEQ.

Belongs to the RNA polymerase beta chain family. In terms of assembly, the RNAP catalytic core consists of 2 alpha, 1 beta, 1 beta' and 1 omega subunit. When a sigma factor is associated with the core the holoenzyme is formed, which can initiate transcription.

The enzyme catalyses RNA(n) + a ribonucleoside 5'-triphosphate = RNA(n+1) + diphosphate. DNA-dependent RNA polymerase catalyzes the transcription of DNA into RNA using the four ribonucleoside triphosphates as substrates. This chain is DNA-directed RNA polymerase subunit beta, found in Vibrio vulnificus (strain CMCP6).